The primary structure comprises 159 residues: Ribosomal RNA large subunit methyltransferase H (159 aa).

S-adenosyl-L-methionine is bound by residues Leu76, Gly108, and 127–132; that span reads FSKMTF.

Belongs to the RNA methyltransferase RlmH family. Homodimer.

It is found in the cytoplasm. It catalyses the reaction pseudouridine(1915) in 23S rRNA + S-adenosyl-L-methionine = N(3)-methylpseudouridine(1915) in 23S rRNA + S-adenosyl-L-homocysteine + H(+). Its function is as follows. Specifically methylates the pseudouridine at position 1915 (m3Psi1915) in 23S rRNA. The protein is Ribosomal RNA large subunit methyltransferase H of Lachnospira eligens (strain ATCC 27750 / DSM 3376 / VPI C15-48 / C15-B4) (Eubacterium eligens).